Here is a 476-residue protein sequence, read N- to C-terminus: Aspartyl/glutamyl-tRNA(Asn/Gln) amidotransferase subunit B (476 aa).

The protein belongs to the GatB/GatE family. GatB subfamily. In terms of assembly, heterotrimer of A, B and C subunits.

It catalyses the reaction L-glutamyl-tRNA(Gln) + L-glutamine + ATP + H2O = L-glutaminyl-tRNA(Gln) + L-glutamate + ADP + phosphate + H(+). The enzyme catalyses L-aspartyl-tRNA(Asn) + L-glutamine + ATP + H2O = L-asparaginyl-tRNA(Asn) + L-glutamate + ADP + phosphate + 2 H(+). Allows the formation of correctly charged Asn-tRNA(Asn) or Gln-tRNA(Gln) through the transamidation of misacylated Asp-tRNA(Asn) or Glu-tRNA(Gln) in organisms which lack either or both of asparaginyl-tRNA or glutaminyl-tRNA synthetases. The reaction takes place in the presence of glutamine and ATP through an activated phospho-Asp-tRNA(Asn) or phospho-Glu-tRNA(Gln). This is Aspartyl/glutamyl-tRNA(Asn/Gln) amidotransferase subunit B from Lactobacillus acidophilus (strain ATCC 700396 / NCK56 / N2 / NCFM).